The sequence spans 467 residues: Probable citrate synthase 2, mitochondrial (467 aa).

Active-site residues include H303, H349, and D404.

It belongs to the citrate synthase family. In terms of assembly, homodimer.

It localises to the mitochondrion matrix. It catalyses the reaction oxaloacetate + acetyl-CoA + H2O = citrate + CoA + H(+). The protein operates within carbohydrate metabolism; tricarboxylic acid cycle; isocitrate from oxaloacetate: step 1/2. This Aedes aegypti (Yellowfever mosquito) protein is Probable citrate synthase 2, mitochondrial.